The sequence spans 548 residues: Natural resistance-associated macrophage protein 1 (548 aa).

The segment at 1 to 38 (MSGDTGPPKQGGTRYGSISSPPSPEPQQAPPGGTYLSE) is disordered. Over 1–55 (MSGDTGPPKQGGTRYGSISSPPSPEPQQAPPGGTYLSEKIPIPDTESGTFSLRKL) the chain is Cytoplasmic. Residues 56 to 73 (WAFTGPGFLMSIAFLDPG) traverse the membrane as a helical segment. The Extracellular portion of the chain corresponds to 74–82 (NIESDLQAG). A helical transmembrane segment spans residues 83 to 102 (AVAGFKLLWVLLWATVLGLL). Over 103-139 (CQRLAARLGVVTGKDLGEVCHLYYPKVPRILLWLTIE) the chain is Cytoplasmic. The chain crosses the membrane as a helical span at residues 140–160 (LAIVGSDMQEVIGTAIAFSLL). Residues 161–164 (SAGR) lie on the Extracellular side of the membrane. A helical transmembrane segment spans residues 165 to 184 (IPLWGGVLITIVDAFFFLFL). At 185–193 (DNYGLRKLE) the chain is on the cytoplasmic side. The helical transmembrane segment at 194 to 214 (AFFGFLITIMALTFGYEYVVA) threads the bilayer. Residues 215-237 (QPAQGALLQGLFLPSCPGCGQPE) are Extracellular-facing. Residues 238 to 256 (LLQAVGIIGAIIMPHNIYL) traverse the membrane as a helical segment. Topologically, residues 257–284 (HSSLVKSREVDRSRRADIREANMYFLIE) are cytoplasmic. Residues 285–304 (ATIALSVSFLINLFVMAVFG) form a helical membrane-spanning segment. Topologically, residues 305–346 (QAFYKQTNQAAFNICANSSLQDYAPIFPRNNLTVAVDIYQGG) are extracellular. N-linked (GlcNAc...) asparagine glycans are attached at residues Asn321 and Asn335. Residues 347–366 (VILGCLFGPAALYIWAVGLL) form a helical membrane-spanning segment. Residues 367-397 (AAGQSSTMTGTYAGQFVMEGFLKLRWSRFAR) are Cytoplasmic-facing. The helical transmembrane segment at 398–415 (VLLTRSCAILPTVLLAVF) threads the bilayer. Topologically, residues 416-426 (RDLRDLSGLND) are extracellular. A helical transmembrane segment spans residues 427–447 (LLNVLQSLLLPFAVLPILTFT). The Cytoplasmic segment spans residues 448–463 (SMPALMREFANGLVSK). A helical transmembrane segment spans residues 464-485 (VITSSIMVLVCAVNLYFVISYV). The Extracellular segment spans residues 486–493 (PSLPHPAY). The chain crosses the membrane as a helical span at residues 494-513 (FSLVALLAAAYLGLTTYLVW). The Cytoplasmic portion of the chain corresponds to 514-548 (TCLITQGATLLAHSSHQRFLYGLPEEDQEKGRTSG).

The protein belongs to the NRAMP family.

The protein resides in the late endosome membrane. It localises to the lysosome membrane. The enzyme catalyses Zn(2+)(in) + H(+)(out) = Zn(2+)(out) + H(+)(in). It carries out the reaction Fe(2+)(in) + H(+)(out) = Fe(2+)(out) + H(+)(in). The catalysed reaction is Mn(2+)(in) + H(+)(out) = Mn(2+)(out) + H(+)(in). In terms of biological role, macrophage-specific antiporter that fluxes metal ions in either direction against a proton gradient. Localized to late endosomal lysosomal membranes, delivers bivalent cations from the cytosol into these acidic compartments where they may directly affect antimicrobial activity. Involved in iron metabolism and host natural resistance to infection with intracellular parasites. Pathogen resistance involves sequestration of Fe(2+) and Mn(2+), cofactors of both prokaryotic and eukaryotic catalases and superoxide dismutases, not only to protect the macrophage against its own generation of reactive oxygen species, but to deny the cations to the pathogen for synthesis of its protective enzymes. This chain is Natural resistance-associated macrophage protein 1 (SLC11A1), found in Bison bison (American bison).